Here is a 277-residue protein sequence, read N- to C-terminus: Probable enoyl-CoA hydratase, mitochondrial (277 aa).

Residues 1–42 (MLKQVIKTVSSSQAPKKYFFKQFCTSTTEKKGRVGLVTLNRP) constitute a mitochondrion transit peptide. Substrate-binding positions include 85–88 (ADIK) and Gly128.

Belongs to the enoyl-CoA hydratase/isomerase family. As to quaternary structure, homohexamer; dimer of trimers.

It localises to the mitochondrion matrix. It carries out the reaction a (3S)-3-hydroxyacyl-CoA = a (2E)-enoyl-CoA + H2O. The enzyme catalyses a 4-saturated-(3S)-3-hydroxyacyl-CoA = a (3E)-enoyl-CoA + H2O. The catalysed reaction is (3S)-3-hydroxybutanoyl-CoA = (2E)-butenoyl-CoA + H2O. It catalyses the reaction 3-hydroxyisovaleryl-CoA = 3-methylbut-2-enoyl-CoA + H2O. It carries out the reaction 3-hydroxypropanoyl-CoA = acryloyl-CoA + H2O. The enzyme catalyses 3-hydroxybutanoyl-CoA = (2E)-butenoyl-CoA + H2O. It functions in the pathway lipid metabolism; fatty acid beta-oxidation. Its function is as follows. Straight-chain enoyl-CoA thioesters from C4 up to at least C16 are processed, although with decreasing catalytic rate. The chain is Probable enoyl-CoA hydratase, mitochondrial (echs1) from Dictyostelium discoideum (Social amoeba).